Reading from the N-terminus, the 926-residue chain is LPS-assembly protein LptD (926 aa).

An N-terminal signal peptide occupies residues methionine 1 to alanine 22. A disordered region spans residues alanine 55 to threonine 91. Residues threonine 68–threonine 91 show a composition bias toward low complexity.

This sequence belongs to the LptD family. Component of the lipopolysaccharide transport and assembly complex. Interacts with LptE and LptA.

Its subcellular location is the cell outer membrane. Together with LptE, is involved in the assembly of lipopolysaccharide (LPS) at the surface of the outer membrane. In Pseudomonas syringae pv. syringae (strain B728a), this protein is LPS-assembly protein LptD.